The following is a 424-amino-acid chain: MHRLQVVLGHLAGRPESSSALQAAPCSAGFLQASASDVVVVHGRRTPIGRASRGCFKDTTPDELLSAVLTAVLQDVKLKPEQLGDISVGNVLQPGAGAIMARIAQFLSGIPETVPLSTVNRQCSSGLQAVANIAGGIRNGSYDIGMACGVESMTLSQRGNHGNISSRLLENEKARDCLIPMGITSENVAERFGVSRQKQDAFALASQQKAASAQSRGCFHAEIVPVTTTVLNDKGDKKTITVSQDEGVRPSTTMQGLAKLKPAFKDGGSTTAGNSSQVSDGAAAVLLARRSKAEELGLPILGVLRSYAVVGVPPDVMGIGPAYAIPAALQKAGLTVNDIDIFEINEAFASQAVYCVEKLGIPAEKVNPLGGAIALGHPLGCTGARQVVTLLNELKRRGRRAYGVVSMCIGTGMGAAAVFEYPGN.

A peroxisome-targeting transit peptide spans 1–26; it reads MHRLQVVLGHLAGRPESSSALQAAPC. The segment at 1-26 is PTS2-type peroxisomal targeting signal; the sequence is MHRLQVVLGHLAGRPESSSALQAAPC. Catalysis depends on Cys-123, which acts as the Acyl-thioester intermediate. Lys-173 and Lys-234 each carry N6-acetyllysine. Positions 249, 252, and 276 each coordinate CoA. The active-site Proton donor/acceptor is Cys-408.

This sequence belongs to the thiolase-like superfamily. Thiolase family. As to quaternary structure, homodimer. Interacts (via PTS2-type peroxisomal targeting signal region) with PEX7; leading to its translocation into peroxisomes. Mainly expressed in liver; weaker levels in kidney, intestine and white adipose tissue.

The protein localises to the peroxisome. It catalyses the reaction an acyl-CoA + acetyl-CoA = a 3-oxoacyl-CoA + CoA. The enzyme catalyses 2 acetyl-CoA = acetoacetyl-CoA + CoA. It carries out the reaction hexanoyl-CoA + acetyl-CoA = 3-oxooctanoyl-CoA + CoA. The catalysed reaction is tetradecanoyl-CoA + acetyl-CoA = 3-oxohexadecanoyl-CoA + CoA. It catalyses the reaction 3-oxohexadecanedioyl-CoA + CoA = tetradecanedioyl-CoA + acetyl-CoA. The enzyme catalyses 3-oxo-(6Z,9Z,12Z,15Z,18Z,21Z)-tetracosahexaenoyl-CoA + CoA = (4Z,7Z,10Z,13Z,16Z,19Z)-docosahexaenoyl-CoA + acetyl-CoA. It functions in the pathway lipid metabolism; peroxisomal fatty acid beta-oxidation. Functionally, responsible for the thiolytic cleavage of straight chain 3-keto fatty acyl-CoAs (3-oxoacyl-CoAs). Plays an important role in fatty acid peroxisomal beta-oxidation. Catalyzes the cleavage of short, medium, long, and very long straight chain 3-oxoacyl-CoAs. This is 3-ketoacyl-CoA thiolase B, peroxisomal from Mus musculus (Mouse).